Here is a 736-residue protein sequence, read N- to C-terminus: Polyribonucleotide nucleotidyltransferase (736 aa).

Residues D506 and D512 each contribute to the Mg(2+) site. A KH domain is found at 573–632 (PRLTTIQVPVDAIGLIIGKGGETIRSITEETGAEINIEDDGTVTIACSSVEGTHAALATI). Positions 642–717 (GTIYLGKVRD…GKTRFALSMR (76 aa)) constitute an S1 motif domain.

Belongs to the polyribonucleotide nucleotidyltransferase family. Mg(2+) is required as a cofactor.

It localises to the cytoplasm. It catalyses the reaction RNA(n+1) + phosphate = RNA(n) + a ribonucleoside 5'-diphosphate. Functionally, involved in mRNA degradation. Catalyzes the phosphorolysis of single-stranded polyribonucleotides processively in the 3'- to 5'-direction. The sequence is that of Polyribonucleotide nucleotidyltransferase from Chlorobium limicola (strain DSM 245 / NBRC 103803 / 6330).